Consider the following 277-residue polypeptide: 3-methyl-2-oxobutanoate hydroxymethyltransferase (277 aa).

Residues Asp58 and Asp97 each contribute to the Mg(2+) site. 3-methyl-2-oxobutanoate-binding positions include 58-59, Asp97, and Lys127; that span reads DS. Glu129 is a Mg(2+) binding site. Catalysis depends on Glu195, which acts as the Proton acceptor.

It belongs to the PanB family. As to quaternary structure, homodecamer; pentamer of dimers. The cofactor is Mg(2+).

It localises to the cytoplasm. The enzyme catalyses 3-methyl-2-oxobutanoate + (6R)-5,10-methylene-5,6,7,8-tetrahydrofolate + H2O = 2-dehydropantoate + (6S)-5,6,7,8-tetrahydrofolate. Its pathway is cofactor biosynthesis; (R)-pantothenate biosynthesis; (R)-pantoate from 3-methyl-2-oxobutanoate: step 1/2. In terms of biological role, catalyzes the reversible reaction in which hydroxymethyl group from 5,10-methylenetetrahydrofolate is transferred onto alpha-ketoisovalerate to form ketopantoate. This is 3-methyl-2-oxobutanoate hydroxymethyltransferase from Leifsonia xyli subsp. xyli (strain CTCB07).